Reading from the N-terminus, the 337-residue chain is Adenylosuccinate synthetase (337 aa).

GTP-binding positions include 12–18 (GDEGKGK) and 42–44 (GHT). Asp-13 acts as the Proton acceptor in catalysis. Positions 13 and 42 each coordinate Mg(2+). Residues 13 to 16 (DEGK), 40 to 43 (NAGH), Thr-124, Arg-138, Gln-176, Thr-191, and Arg-253 each bind IMP. Residue His-43 is the Proton donor of the active site. Residue 249-255 (TVTGRRR) coordinates substrate. GTP-binding positions include Arg-255, 281–283 (GVD), and 321–323 (STG).

This sequence belongs to the adenylosuccinate synthetase family. Homodimer. Mg(2+) serves as cofactor.

Its subcellular location is the cytoplasm. The catalysed reaction is IMP + L-aspartate + GTP = N(6)-(1,2-dicarboxyethyl)-AMP + GDP + phosphate + 2 H(+). It participates in purine metabolism; AMP biosynthesis via de novo pathway; AMP from IMP: step 1/2. In terms of biological role, plays an important role in the de novo pathway of purine nucleotide biosynthesis. Catalyzes the first committed step in the biosynthesis of AMP from IMP. The chain is Adenylosuccinate synthetase from Archaeoglobus fulgidus (strain ATCC 49558 / DSM 4304 / JCM 9628 / NBRC 100126 / VC-16).